Here is a 260-residue protein sequence, read N- to C-terminus: Voltage-dependent calcium channel gamma-6 subunit (260 aa).

A run of 4 helical transmembrane segments spans residues 43 to 63 (LLVA…EFWV), 143 to 163 (VIAV…IMVL), 169 to 189 (FLLR…FVSL), and 221 to 241 (LGCG…FLLL).

Belongs to the PMP-22/EMP/MP20 family. CACNG subfamily. In terms of assembly, interacts with CACNA1C. Identified in a complex with the L-type calcium channel subunits CACNA1C, CACNA2D1 and either CACNB1 or CACNB2. As to expression, detected in heart atrium and ventricle, aorta and skeletal muscle. Detected in heart left ventricle.

The protein resides in the cell membrane. Regulates the activity of L-type calcium channels that contain CACNA1C as pore-forming subunit. This Rattus norvegicus (Rat) protein is Voltage-dependent calcium channel gamma-6 subunit (Cacng6).